The sequence spans 648 residues: Threonine--tRNA ligase (648 aa).

Residues 1–63 (MTEINIEFPD…NENVKIEIVT (63 aa)) form the TGS domain. The tract at residues 243-541 (DHRVIGNNLD…LIEMYKGAFP (299 aa)) is catalytic. Zn(2+) contacts are provided by Cys337, His388, and His518.

The protein belongs to the class-II aminoacyl-tRNA synthetase family. In terms of assembly, homodimer. Requires Zn(2+) as cofactor.

It is found in the cytoplasm. It catalyses the reaction tRNA(Thr) + L-threonine + ATP = L-threonyl-tRNA(Thr) + AMP + diphosphate + H(+). Catalyzes the attachment of threonine to tRNA(Thr) in a two-step reaction: L-threonine is first activated by ATP to form Thr-AMP and then transferred to the acceptor end of tRNA(Thr). Also edits incorrectly charged L-seryl-tRNA(Thr). The sequence is that of Threonine--tRNA ligase from Pediococcus pentosaceus (strain ATCC 25745 / CCUG 21536 / LMG 10740 / 183-1w).